A 100-amino-acid polypeptide reads, in one-letter code: Protein Vpr (100 aa).

A homooligomerization region spans residues 1–42 (MEQALENQGPAREPFNEWTLELLEELKEEAVRHFPRPWLQAC). 3 positions are modified to phosphoserine; by host: S79, S98, and S100.

Belongs to the HIV-1 VPR protein family. Homooligomer, may form homodimer. Interacts with p6-gag region of the Pr55 Gag precursor protein through a (Leu-X-X)4 motif near the C-terminus of the P6gag protein. Interacts with host UNG. May interact with host RAD23A/HHR23A. Interacts with host VPRBP/DCAF1, leading to hijack the CUL4A-RBX1-DDB1-DCAF1/VPRBP complex, mediating ubiquitination of host proteins such as TERT and ZGPAT and arrest of the cell cycle in G2 phase. In terms of processing, phosphorylated on several residues by host. These phosphorylations regulate VPR activity for the nuclear import of the HIV-1 pre-integration complex.

The protein resides in the virion. It localises to the host nucleus. It is found in the host extracellular space. Functionally, during virus replication, may deplete host UNG protein, and incude G2-M cell cycle arrest. Acts by targeting specific host proteins for degradation by the 26S proteasome, through association with the cellular CUL4A-DDB1 E3 ligase complex by direct interaction with host VPRPB/DCAF-1. Cell cycle arrest reportedly occurs within hours of infection and is not blocked by antiviral agents, suggesting that it is initiated by the VPR carried into the virion. Additionally, VPR induces apoptosis in a cell cycle dependent manner suggesting that these two effects are mechanistically linked. Detected in the serum and cerebrospinal fluid of AIDS patient, VPR may also induce cell death to bystander cells. During virus entry, plays a role in the transport of the viral pre-integration (PIC) complex to the host nucleus. This function is crucial for viral infection of non-dividing macrophages. May act directly at the nuclear pore complex, by binding nucleoporins phenylalanine-glycine (FG)-repeat regions. This is Protein Vpr from Human immunodeficiency virus type 1 group O (isolate MVP5180) (HIV-1).